We begin with the raw amino-acid sequence, 813 residues long: LPS-assembly protein LptD (813 aa).

The N-terminal stretch at 1–22 (MRRALRLLPLPLSIAICLPAMA) is a signal peptide.

It belongs to the LptD family. Component of the lipopolysaccharide transport and assembly complex. Interacts with LptE and LptA.

It localises to the cell outer membrane. Together with LptE, is involved in the assembly of lipopolysaccharide (LPS) at the surface of the outer membrane. This chain is LPS-assembly protein LptD, found in Xanthomonas oryzae pv. oryzae (strain KACC10331 / KXO85).